The primary structure comprises 248 residues: Probable transcriptional regulatory protein Oter_1471 (248 aa).

It belongs to the TACO1 family.

The protein localises to the cytoplasm. This is Probable transcriptional regulatory protein Oter_1471 from Opitutus terrae (strain DSM 11246 / JCM 15787 / PB90-1).